Reading from the N-terminus, the 797-residue chain is Sodium/hydrogen exchanger 4 (797 aa).

Residues 1-13 (MGPAMFMAFRLWN) lie on the Cytoplasmic side of the membrane. Residues 14-28 (WLLLLAVLTRSEATS) constitute an intramembrane region (name=A/M1). The Cytoplasmic segment spans residues 29–69 (YVNESSNPTAQQAPDARFAASSSDPDEGISVFELDYDYVQI). A disordered region spans residues 32–52 (ESSNPTAQQAPDARFAASSSD). The segment at residues 70–90 (PYEVTLWILLASLAKIGFHLY) is an intramembrane region (name=B/M2). Residues 91 to 94 (HRLP) lie on the Cytoplasmic side of the membrane. A helical transmembrane segment spans residues 95–114 (HLMPESCLLIIVGALVGGII). Residues 115 to 127 (FGTHHKSPPVMDS) lie on the Extracellular side of the membrane. Residues 128-148 (SIYFLYLLPPIVLESGYFMPT) form a helical membrane-spanning segment. Residues 149 to 154 (RPFFEN) lie on the Cytoplasmic side of the membrane. Residues 155–175 (IGSILWWAGLGALINAFGIGL) traverse the membrane as a helical segment. Residues 176–194 (SLYFICQIKAFGLGDINLL) lie on the Extracellular side of the membrane. Residues 195-215 (HNLLFGSLISAVDPVAVLAVF) form a helical membrane-spanning segment. Residues 216-226 (EEARVNEQLYM) are Cytoplasmic-facing. Residues 227-247 (MIFGEALLNDGISVVLYNILI) traverse the membrane as a helical segment. Residues 248 to 270 (AFTKMHKFEDIEAVDILAGCARF) lie on the Extracellular side of the membrane. A helical transmembrane segment spans residues 271–291 (VIVGCGGVFFGIIFGFISAFI). At 292–304 (TRFTQNISAIEPL) the chain is on the cytoplasmic side. Residues 305–325 (IVFMFSYLSYLAAETLYLSGI) traverse the membrane as a helical segment. Over 326–352 (LAITACAVTMKKYVEENVSQTSYTTIK) the chain is Extracellular. Asn-342 is a glycosylation site (N-linked (GlcNAc...) asparagine). The chain crosses the membrane as a helical span at residues 353–373 (YFMKMLSSVSETLIFIFMGVS). Residues 374–384 (TIGKNHEWNWA) are Cytoplasmic-facing. Residues 385–405 (FICFTLLFCQIWRAISVFTLF) traverse the membrane as a helical segment. At 406–420 (YVSNQFRTFPFSIKD) the chain is on the extracellular side. The name=L intramembrane region spans 421–441 (QFIIFYSGVRGAGSFSLAFLL). Residues 442–450 (PLSLFPRKK) are Extracellular-facing. Residues 451 to 471 (LFVTATLVVTYFTVFFQGITI) form a helical membrane-spanning segment. Residues 472–797 (GPLVRYLDVR…KSHSPLLHRK (326 aa)) lie on the Cytoplasmic side of the membrane. The span at 759 to 769 (YDSGEQTEEET) shows a compositional bias: acidic residues. The disordered stretch occupies residues 759-797 (YDSGEQTEEETSAILSRWTAEHRHSTEHHKSHSPLLHRK). The segment covering 783–797 (STEHHKSHSPLLHRK) has biased composition (basic residues).

It belongs to the monovalent cation:proton antiporter 1 (CPA1) transporter (TC 2.A.36) family. Homodimer; each protomer has one site for sodium and one site for proton binding. Interacts with CHP1 and CHP2. May be phosphorylated. In terms of tissue distribution, expressed in kidney. Expressed in uterus and endometrial epithelial cells. Expressed in the inner segments of inner medullary collecting ducts (IMCD) in kidney. Expressed in AGTR1-positive neurons in organum vasculosum of the lamina terminalis (at protein level).

The protein localises to the basolateral cell membrane. It localises to the apical cell membrane. Its subcellular location is the zymogen granule membrane. The enzyme catalyses Na(+)(in) + H(+)(out) = Na(+)(out) + H(+)(in). It catalyses the reaction Na(+)(out) + NH4(+)(in) = Na(+)(in) + NH4(+)(out). With respect to regulation, up-regulated in response to high extracellular sodium concentration. Functionally, electroneutral antiporter that exchanges sodium for protons or ammonium ions at the basolateral membrane of epithelia to regulate cell volume and intracellular pH upon hypertonic conditions. As part of transcellular ammonia transport in renal tubules, mediates basolateral ammonium extrusion in the medullary thick ascending limb, regulating the corticopapillary ammonium gradient and overall renal acid excretion. Mediates sodium:proton exchange in gastric parietal cells secondary to cAMP-dependent acid secretion and hyperosmolarity. Possibly coupled to chloride:bicarbonate antiporter, enables loading of parietal cells with sodium and chloride ions to maintain cell volume and normal gastric acid secretion. Functions as a sodium sensor in neurons of organum vasculosum of the lamina terminalis where it regulates water intake in response to increased sodium concentration in body fluids. In Mus musculus (Mouse), this protein is Sodium/hydrogen exchanger 4 (Slc9a4).